The chain runs to 295 residues: Ribosomal RNA small subunit methyltransferase A (295 aa).

S-adenosyl-L-methionine contacts are provided by asparagine 25, leucine 27, glycine 52, glutamate 73, aspartate 98, and asparagine 120.

The protein belongs to the class I-like SAM-binding methyltransferase superfamily. rRNA adenine N(6)-methyltransferase family. RsmA subfamily.

Its subcellular location is the cytoplasm. The catalysed reaction is adenosine(1518)/adenosine(1519) in 16S rRNA + 4 S-adenosyl-L-methionine = N(6)-dimethyladenosine(1518)/N(6)-dimethyladenosine(1519) in 16S rRNA + 4 S-adenosyl-L-homocysteine + 4 H(+). Specifically dimethylates two adjacent adenosines (A1518 and A1519) in the loop of a conserved hairpin near the 3'-end of 16S rRNA in the 30S particle. May play a critical role in biogenesis of 30S subunits. The protein is Ribosomal RNA small subunit methyltransferase A of Desulfotalea psychrophila (strain LSv54 / DSM 12343).